A 269-amino-acid chain; its full sequence is Probable cytochrome c oxidase subunit 2 (269 aa).

The next 3 membrane-spanning stretches (helical) occupy residues 8 to 28 (ITLI…PLPW), 50 to 70 (LLYI…FVCI), and 87 to 107 (ILIE…IAVP). Residues His189, Cys224, Cys228, and His232 each contribute to the Cu cation site.

The protein belongs to the cytochrome c oxidase subunit 2 family. Cu cation serves as cofactor. It depends on heme as a cofactor.

The protein localises to the cell membrane. The catalysed reaction is 4 Fe(II)-[cytochrome c] + O2 + 8 H(+)(in) = 4 Fe(III)-[cytochrome c] + 2 H2O + 4 H(+)(out). Subunits I and II form the functional core of the enzyme complex. Electrons originating in cytochrome c are transferred via heme a and Cu(A) to the binuclear center formed by heme a3 and Cu(B). This chain is Probable cytochrome c oxidase subunit 2 (ctaC), found in Rickettsia bellii (strain RML369-C).